The chain runs to 222 residues: Abasic site processing protein YedK (222 aa).

Residue Cys-2 is the Nucleophile of the active site. Residue Cys-2 is modified to Thiazolidine linkage to a ring-opened DNA abasic site. The active site involves Glu-105.

The protein belongs to the SOS response-associated peptidase family.

With respect to regulation, formation and reversal of DNA-protein cross-link depends on DNA context. Catalyzes formation of the thiazolidine linkage in presence of abasic sites in single-stranded DNA. Mediates the reversal of the thiazolidine cross-link in presence of double stranded DNA. Functionally, sensor of abasic sites in single-stranded DNA (ssDNA) required to preserve genome integrity by promoting error-free repair of abasic sites. Recognizes and binds abasic sites in ssDNA at replication forks and chemically modifies the lesion by forming a covalent cross-link with DNA: forms a stable thiazolidine linkage between a ring-opened abasic site and the alpha-amino and sulfhydryl substituents of its N-terminal catalytic cysteine residue. The DNA-protein cross-link is then reversed: able to catalyze the reversal of the thiazolidine cross-link and cycle between a cross-link and a non-cross-linked state depending on DNA context: mediates self-reversal of the thiazolidine cross-link in double stranded DNA. May act as a protease: mediates autocatalytic processing of its N-terminal methionine in order to expose the catalytic cysteine. The sequence is that of Abasic site processing protein YedK from Escherichia coli (strain K12).